A 725-amino-acid chain; its full sequence is Catalase-peroxidase (725 aa).

The tryptophyl-tyrosyl-methioninium (Trp-Tyr) (with M-253) cross-link spans 99–227 (WHAAGTYRIA…LAAVMMGLIY (129 aa)). Catalysis depends on His-100, which acts as the Proton acceptor. The tryptophyl-tyrosyl-methioninium (Tyr-Met) (with W-99) cross-link spans 227–253 (YVNPEGVDGNPDPLKTAHDIRITFSRM). Residue His-268 participates in heme b binding.

The protein belongs to the peroxidase family. Peroxidase/catalase subfamily. In terms of assembly, homodimer or homotetramer. It depends on heme b as a cofactor. Formation of the three residue Trp-Tyr-Met cross-link is important for the catalase, but not the peroxidase activity of the enzyme.

It catalyses the reaction H2O2 + AH2 = A + 2 H2O. The catalysed reaction is 2 H2O2 = O2 + 2 H2O. Functionally, bifunctional enzyme with both catalase and broad-spectrum peroxidase activity. This Picosynechococcus sp. (strain ATCC 27264 / PCC 7002 / PR-6) (Agmenellum quadruplicatum) protein is Catalase-peroxidase.